The following is a 448-amino-acid chain: Chromosomal replication initiator protein DnaA (448 aa).

The tract at residues M1–E85 is domain I, interacts with DnaA modulators. Residues E85 to L110 are domain II. The interval I111–S327 is domain III, AAA+ region. G155, G157, K158, and T159 together coordinate ATP. The interval S328–D448 is domain IV, binds dsDNA.

The protein belongs to the DnaA family. In terms of assembly, oligomerizes as a right-handed, spiral filament on DNA at oriC.

Its subcellular location is the cytoplasm. Plays an essential role in the initiation and regulation of chromosomal replication. ATP-DnaA binds to the origin of replication (oriC) to initiate formation of the DNA replication initiation complex once per cell cycle. Binds the DnaA box (a 9 base pair repeat at the origin) and separates the double-stranded (ds)DNA. Forms a right-handed helical filament on oriC DNA; dsDNA binds to the exterior of the filament while single-stranded (ss)DNA is stabiized in the filament's interior. The ATP-DnaA-oriC complex binds and stabilizes one strand of the AT-rich DNA unwinding element (DUE), permitting loading of DNA polymerase. After initiation quickly degrades to an ADP-DnaA complex that is not apt for DNA replication. Binds acidic phospholipids. In Alkaliphilus metalliredigens (strain QYMF), this protein is Chromosomal replication initiator protein DnaA.